Here is a 245-residue protein sequence, read N- to C-terminus: Enolase-phosphatase E1 (245 aa).

This sequence belongs to the HAD-like hydrolase superfamily. MasA/MtnC family. As to quaternary structure, monomer. The cofactor is Mg(2+).

The catalysed reaction is 5-methylsulfanyl-2,3-dioxopentyl phosphate + H2O = 1,2-dihydroxy-5-(methylsulfanyl)pent-1-en-3-one + phosphate. It participates in amino-acid biosynthesis; L-methionine biosynthesis via salvage pathway; L-methionine from S-methyl-5-thio-alpha-D-ribose 1-phosphate: step 3/6. The protein operates within amino-acid biosynthesis; L-methionine biosynthesis via salvage pathway; L-methionine from S-methyl-5-thio-alpha-D-ribose 1-phosphate: step 4/6. In terms of biological role, bifunctional enzyme that catalyzes the enolization of 2,3-diketo-5-methylthiopentyl-1-phosphate (DK-MTP-1-P) into the intermediate 2-hydroxy-3-keto-5-methylthiopentenyl-1-phosphate (HK-MTPenyl-1-P), which is then dephosphorylated to form the acireductone 1,2-dihydroxy-3-keto-5-methylthiopentene (DHK-MTPene). The sequence is that of Enolase-phosphatase E1 from Parasynechococcus marenigrum (strain WH8102).